Consider the following 82-residue polypeptide: Small ribosomal subunit protein bS16 (82 aa).

Belongs to the bacterial ribosomal protein bS16 family.

In Methylobacillus flagellatus (strain ATCC 51484 / DSM 6875 / VKM B-1610 / KT), this protein is Small ribosomal subunit protein bS16.